The sequence spans 360 residues: Dihydroorotate dehydrogenase (quinone) (360 aa).

FMN-binding positions include 66–70 (AGFDK) and threonine 90. Lysine 70 serves as a coordination point for substrate. 115-119 (NRMGF) contacts substrate. The FMN site is built by asparagine 143 and asparagine 176. Asparagine 176 contacts substrate. Serine 179 (nucleophile) is an active-site residue. Position 181 (asparagine 181) interacts with substrate. 2 residues coordinate FMN: lysine 212 and threonine 240. Residue 241-242 (NT) participates in substrate binding. Residues glycine 264, glycine 293, and 314-315 (YT) each bind FMN.

The protein belongs to the dihydroorotate dehydrogenase family. Type 2 subfamily. As to quaternary structure, monomer. FMN serves as cofactor.

It localises to the cell membrane. The enzyme catalyses (S)-dihydroorotate + a quinone = orotate + a quinol. Its pathway is pyrimidine metabolism; UMP biosynthesis via de novo pathway; orotate from (S)-dihydroorotate (quinone route): step 1/1. Catalyzes the conversion of dihydroorotate to orotate with quinone as electron acceptor. In Mycobacterium marinum (strain ATCC BAA-535 / M), this protein is Dihydroorotate dehydrogenase (quinone).